A 380-amino-acid polypeptide reads, in one-letter code: MSNTAGQVIRCRAAVAWEAGKPLVIEEVEVAPPQANEVRIKILFTSLCHTDVYFWEAKGQNPLFPRIYGHEAGGIVESVGEGVTDLKAGDHVLPVFTGECKDCAHCKSEESNMCDLLRINTDRGVMLSDGKSRFSIKGKPIYHFVGTSTFSEYTVVHVGCLAKINPSAPLDKVCLLSCGISTGLGATLNVAKPKKGSTVAVFGLGAVGLAAAEGARLSGASRIIGVDLHSDRFEEAKKFGVTEFVNPKAHEKPVQEVIAELTNRGVDRSIECTGSTEAMISAFECVHDGWGVAVLVGVPHKDAVFKTHPVNFLNERTLKGTFFGNYKTRTDIPSVVEKYMNKELELEKFITHKVPFSEINKAFEYMLKGEGLRCIIRMEE.

8 residues coordinate Zn(2+): C48, T50, H70, C100, C103, C106, C114, and C178. An alcohol-binding residues include T50 and H70. T50 serves as a coordination point for NAD(+). NAD(+) is bound by residues 203–208 (GLGAVG), D227, R232, T273, V296, 296–298 (VGV), F323, and R373.

This sequence belongs to the zinc-containing alcohol dehydrogenase family. As to quaternary structure, homodimer. Requires Zn(2+) as cofactor.

The protein resides in the cytoplasm. The enzyme catalyses a primary alcohol + NAD(+) = an aldehyde + NADH + H(+). It catalyses the reaction a secondary alcohol + NAD(+) = a ketone + NADH + H(+). The chain is Alcohol dehydrogenase (ADH) from Malus domestica (Apple).